The chain runs to 664 residues: Methionine--tRNA ligase (664 aa).

A 'HIGH' region motif is present at residues 13–23; sequence PYTNGPCHLGH. Residues C144, C147, C156, and C160 each coordinate Zn(2+). A 'KMSKS' region motif is present at residues 327–331; the sequence is KFSKS. Residue K330 participates in ATP binding. In terms of domain architecture, tRNA-binding spans 566 to 664; that stretch reads EFAKVEMKTG…TPVPSGTKIR (99 aa).

Belongs to the class-I aminoacyl-tRNA synthetase family. MetG type 1 subfamily. In terms of assembly, homodimer. Zn(2+) is required as a cofactor.

It is found in the cytoplasm. The catalysed reaction is tRNA(Met) + L-methionine + ATP = L-methionyl-tRNA(Met) + AMP + diphosphate. Its function is as follows. Is required not only for elongation of protein synthesis but also for the initiation of all mRNA translation through initiator tRNA(fMet) aminoacylation. The polypeptide is Methionine--tRNA ligase (Methanospirillum hungatei JF-1 (strain ATCC 27890 / DSM 864 / NBRC 100397 / JF-1)).